The sequence spans 224 residues: Peptidyl-prolyl cis-trans isomerase CYP21-1 (224 aa).

The N-terminal stretch at 1–27 (MRREISFLLQPRCLLLLVALTIFLVFA) is a signal peptide. Positions 50 to 214 (FLDVDIDGQR…KKVVIADSGE (165 aa)) constitute a PPIase cyclophilin-type domain. An N-linked (GlcNAc...) asparagine glycan is attached at Asn-158.

The protein belongs to the cyclophilin-type PPIase family. In terms of tissue distribution, ubiquitous.

Its subcellular location is the endoplasmic reticulum. It catalyses the reaction [protein]-peptidylproline (omega=180) = [protein]-peptidylproline (omega=0). Its function is as follows. PPIases accelerate the folding of proteins. It catalyzes the cis-trans isomerization of proline imidic peptide bonds in oligopeptides. The protein is Peptidyl-prolyl cis-trans isomerase CYP21-1 (CYP21-1) of Arabidopsis thaliana (Mouse-ear cress).